Consider the following 351-residue polypeptide: Porphobilinogen deaminase (351 aa).

Cys242 is subject to S-(dipyrrolylmethanemethyl)cysteine.

It belongs to the HMBS family. In terms of assembly, monomer. Dipyrromethane is required as a cofactor.

It carries out the reaction 4 porphobilinogen + H2O = hydroxymethylbilane + 4 NH4(+). It participates in porphyrin-containing compound metabolism; protoporphyrin-IX biosynthesis; coproporphyrinogen-III from 5-aminolevulinate: step 2/4. In terms of biological role, tetrapolymerization of the monopyrrole PBG into the hydroxymethylbilane pre-uroporphyrinogen in several discrete steps. In Rickettsia rickettsii (strain Sheila Smith), this protein is Porphobilinogen deaminase.